We begin with the raw amino-acid sequence, 224 residues long: Urease accessory protein UreF (224 aa).

It belongs to the UreF family. In terms of assembly, ureD, UreF and UreG form a complex that acts as a GTP-hydrolysis-dependent molecular chaperone, activating the urease apoprotein by helping to assemble the nickel containing metallocenter of UreC. The UreE protein probably delivers the nickel.

It localises to the cytoplasm. Functionally, required for maturation of urease via the functional incorporation of the urease nickel metallocenter. This Pseudomonas putida (strain ATCC 700007 / DSM 6899 / JCM 31910 / BCRC 17059 / LMG 24140 / F1) protein is Urease accessory protein UreF.